Here is a 513-residue protein sequence, read N- to C-terminus: L-threonine dehydratase biosynthetic IlvA (513 aa).

Lys61 is modified (N6-(pyridoxal phosphate)lysine). Pyridoxal 5'-phosphate contacts are provided by residues Asn88, Gly187–Leu191, and Ser314. 2 ACT-like domains span residues Ala338–Asn409 and Arg432–Glu504.

This sequence belongs to the serine/threonine dehydratase family. In terms of assembly, homotetramer. Pyridoxal 5'-phosphate serves as cofactor.

The catalysed reaction is L-threonine = 2-oxobutanoate + NH4(+). The protein operates within amino-acid biosynthesis; L-isoleucine biosynthesis; 2-oxobutanoate from L-threonine: step 1/1. Functionally, catalyzes the anaerobic formation of alpha-ketobutyrate and ammonia from threonine in a two-step reaction. The first step involved a dehydration of threonine and a production of enamine intermediates (aminocrotonate), which tautomerizes to its imine form (iminobutyrate). Both intermediates are unstable and short-lived. The second step is the nonenzymatic hydrolysis of the enamine/imine intermediates to form 2-ketobutyrate and free ammonia. In the low water environment of the cell, the second step is accelerated by RidA. This Pasteurella multocida (strain Pm70) protein is L-threonine dehydratase biosynthetic IlvA (ilvA).